A 346-amino-acid polypeptide reads, in one-letter code: Tryptophan--tRNA ligase (346 aa).

ATP-binding positions include 11-13 (RPT) and 19-20 (GH). Positions 12 to 20 (PTGKLHLGH) match the 'HIGH' region motif. Position 143 (Asp143) interacts with L-tryptophan. ATP-binding positions include 155-157 (GKD), Leu193, and 201-205 (KMSKS). Residues 201–205 (KMSKS) carry the 'KMSKS' region motif.

This sequence belongs to the class-I aminoacyl-tRNA synthetase family. Homodimer.

It is found in the cytoplasm. It carries out the reaction tRNA(Trp) + L-tryptophan + ATP = L-tryptophyl-tRNA(Trp) + AMP + diphosphate + H(+). Its function is as follows. Catalyzes the attachment of tryptophan to tRNA(Trp). The sequence is that of Tryptophan--tRNA ligase from Chlamydia muridarum (strain MoPn / Nigg).